Here is a 139-residue protein sequence, read N- to C-terminus: Nucleoside diphosphate kinase (139 aa).

6 residues coordinate ATP: K9, F57, R85, T91, R102, and N112. Catalysis depends on H115, which acts as the Pros-phosphohistidine intermediate.

Belongs to the NDK family. Homotetramer. Mg(2+) serves as cofactor.

It localises to the cytoplasm. It carries out the reaction a 2'-deoxyribonucleoside 5'-diphosphate + ATP = a 2'-deoxyribonucleoside 5'-triphosphate + ADP. The enzyme catalyses a ribonucleoside 5'-diphosphate + ATP = a ribonucleoside 5'-triphosphate + ADP. In terms of biological role, major role in the synthesis of nucleoside triphosphates other than ATP. The ATP gamma phosphate is transferred to the NDP beta phosphate via a ping-pong mechanism, using a phosphorylated active-site intermediate. The sequence is that of Nucleoside diphosphate kinase from Desulfosudis oleivorans (strain DSM 6200 / JCM 39069 / Hxd3) (Desulfococcus oleovorans).